The sequence spans 383 residues: Prokineticin receptor 2 (383 aa).

The Extracellular portion of the chain corresponds to 1–54; sequence MGDQNGNTSFAPDLNPPQDHVSLLPLNYSYGDYDIPLDDDEDVTKTQTFFAAKI. N7 and N27 each carry an N-linked (GlcNAc...) asparagine glycan. A helical membrane pass occupies residues 55–75; sequence VIGVALAGIMLVCGVGNFVFI. Over 76 to 89 the chain is Cytoplasmic; that stretch reads AALARYKKLRNLTN. Residues 90 to 110 form a helical membrane-spanning segment; that stretch reads LLIANLAISDFLVAIVCCPFE. Residues 111 to 136 lie on the Extracellular side of the membrane; the sequence is MDYYVVRQLSWEHGHVLCASVNYLRT. C128 and C207 are joined by a disulfide. A helical membrane pass occupies residues 137 to 157; sequence VSLYVSTNALLAIAIDRYLAI. The Cytoplasmic portion of the chain corresponds to 158 to 170; sequence VHPLKRMNYQTAS. The chain crosses the membrane as a helical span at residues 171–191; it reads FLIALVWMVSILIAIPSAYFT. Topologically, residues 192–222 are extracellular; sequence TETILVIVKNQEKLFCGQIWPVDQQLYYKSY. The chain crosses the membrane as a helical span at residues 223–243; that stretch reads FLFVFGLEFVGPVVTMTLCYA. The Cytoplasmic segment spans residues 244–272; it reads RISQELWFKAVPGFQTEQIRKRLRCRRKT. The helical transmembrane segment at 273–293 threads the bilayer; that stretch reads VLLLMGILTAYVLCWAPFYGF. At 294-312 the chain is on the extracellular side; that stretch reads TIVRDFFPTLVVKEKHYLT. Residues 313–333 form a helical membrane-spanning segment; the sequence is AFYVVECIAMSNSMINTICFV. Topologically, residues 334 to 383 are cytoplasmic; the sequence is TVKNNTMKYFKKMLLLHWRPSHYGSKSSADLDLKTSGVPATEEVDCIRLK.

It belongs to the G-protein coupled receptor 1 family. In terms of assembly, homodimer. In terms of tissue distribution, abundantly expressed in the CNS and reproductive organs with the highest levels in the cerebrum, cerebellum, testis and ovary.

Its subcellular location is the cell membrane. Receptor for prokineticin 2. Exclusively coupled to the G(q) subclass of heteromeric G proteins. Activation leads to mobilization of calcium, stimulation of phosphoinositide turnover and activation of p44/p42 mitogen-activated protein kinase. The sequence is that of Prokineticin receptor 2 (Prokr2) from Rattus norvegicus (Rat).